Consider the following 328-residue polypeptide: Phenylalanine--tRNA ligase alpha subunit (328 aa).

Mg(2+) is bound at residue Glu245.

It belongs to the class-II aminoacyl-tRNA synthetase family. Phe-tRNA synthetase alpha subunit type 1 subfamily. In terms of assembly, tetramer of two alpha and two beta subunits. It depends on Mg(2+) as a cofactor.

It localises to the cytoplasm. It carries out the reaction tRNA(Phe) + L-phenylalanine + ATP = L-phenylalanyl-tRNA(Phe) + AMP + diphosphate + H(+). This Helicobacter pylori (strain ATCC 700392 / 26695) (Campylobacter pylori) protein is Phenylalanine--tRNA ligase alpha subunit (pheS).